We begin with the raw amino-acid sequence, 158 residues long: Protein-export protein SecB (158 aa).

The protein belongs to the SecB family. Homotetramer, a dimer of dimers. One homotetramer interacts with 1 SecA dimer.

It is found in the cytoplasm. One of the proteins required for the normal export of preproteins out of the cell cytoplasm. It is a molecular chaperone that binds to a subset of precursor proteins, maintaining them in a translocation-competent state. It also specifically binds to its receptor SecA. This chain is Protein-export protein SecB, found in Rhodopseudomonas palustris (strain BisB5).